The sequence spans 319 residues: Putative protein phosphatase 2C 23 (319 aa).

Positions 73 to 314 constitute a PPM-type phosphatase domain; it reads AVRMESASCY…DDITVVVACI (242 aa). Mn(2+) is bound by residues G102, D235, and D305.

Belongs to the PP2C family. It depends on Mg(2+) as a cofactor.

It catalyses the reaction O-phospho-L-seryl-[protein] + H2O = L-seryl-[protein] + phosphate. It carries out the reaction O-phospho-L-threonyl-[protein] + H2O = L-threonyl-[protein] + phosphate. This Oryza sativa subsp. japonica (Rice) protein is Putative protein phosphatase 2C 23.